Here is a 163-residue protein sequence, read N- to C-terminus: Phosphopantetheine adenylyltransferase (163 aa).

T10 is a substrate binding site. ATP is bound by residues 10–11 (TF) and H18. Substrate-binding residues include K42, L74, and R88. ATP contacts are provided by residues 89 to 91 (GLR), E99, and 124 to 130 (NSFISST).

It belongs to the bacterial CoaD family. Homohexamer. Mg(2+) is required as a cofactor.

It is found in the cytoplasm. It catalyses the reaction (R)-4'-phosphopantetheine + ATP + H(+) = 3'-dephospho-CoA + diphosphate. Its pathway is cofactor biosynthesis; coenzyme A biosynthesis; CoA from (R)-pantothenate: step 4/5. Functionally, reversibly transfers an adenylyl group from ATP to 4'-phosphopantetheine, yielding dephospho-CoA (dPCoA) and pyrophosphate. The chain is Phosphopantetheine adenylyltransferase from Shewanella putrefaciens (strain CN-32 / ATCC BAA-453).